Reading from the N-terminus, the 593-residue chain is Efflux pump FUBT (593 aa).

The segment at 1–44 (MAIDPQPSSPSLSSETIANDTIGNDNNVNEPSVEPKTQENQHTV) is disordered. Positions 9–30 (SPSLSSETIANDTIGNDNNVNE) are enriched in polar residues. The N-linked (GlcNAc...) asparagine glycan is linked to Asn19. A run of 12 helical transmembrane segments spans residues 98–118 (WAFV…SSAY), 135–155 (VATL…LIWA), 167–187 (FFFT…AGSI), 195–215 (FLTG…IADM), 227–247 (MFSG…GFLG), 254–274 (WLHG…TVFI), 337–357 (IYIS…PIVF), 367–387 (IGGL…ISFA), 410–430 (LPPA…FAWT), 438–458 (IVPI…FMAL), 468–488 (IFAA…GAAF), and 503–523 (WASS…FLFY). The segment at 570–593 (THNSHASAAHSHGHRRSLSYTRSV) is disordered.

It belongs to the major facilitator superfamily. DHA1 family. Polyamines/proton antiporter (TC 2.A.1.2.16) subfamily.

It localises to the cell membrane. Functionally, efflux pump involved in export of fusaric acid, a mycotoxin with low to moderate toxicity to animals and humans, but with high phytotoxic properties. Constitutes a self-protecting mechanism of the fungus against critical levels of FSA within the cell. This Fusarium oxysporum (Fusarium vascular wilt) protein is Efflux pump FUBT.